A 264-amino-acid chain; its full sequence is Cell cycle regulator CcrZ (264 aa).

ATP is bound by residues phenylalanine 32, tryptophan 70, and glycine 73. The Brenner's motif [HXDhX3N] motif lies at 157 to 164; the sequence is HGDVRHSN. The active-site Proton acceptor is aspartate 159. The short motif at 173–196 is the APH element; that stretch reads IYLVDWDSVRLTDRMFDVAHMLCH.

The protein belongs to the aminoglycoside phosphotransferase family. Monomer in solution. Interacts with DnaA (via domains I (1-82) and III (111-326)). Interacts with DnaB. Interacts with FtsZ; the interaction is direct and ensures correct localization during the cell cycle.

The protein localises to the cytoplasm. The enzyme catalyses D-ribose + ATP = D-ribose 5-phosphate + ADP + H(+). It carries out the reaction 2-deoxy-D-ribose + ATP = 2-deoxy-D-ribose 5-phosphate + ADP + H(+). Plays a role in cell cycle regulation and chromosome integrity. Activates DnaA-dependent chromosomal DNA replication initiation ensuring that the chromosome is replicated at the right time during the cell cycle. May regulate replication initiation through phosphorylation of a possible second messenger or metabolite, and by interacting with replication initiation proteins. Has ATPase activity with D-ribose and 2-deoxy-D-ribose in vitro, but not with choline. Involved in DNA damage response. The chain is Cell cycle regulator CcrZ from Streptococcus pneumoniae serotype 2 (strain D39 / NCTC 7466).